Consider the following 316-residue polypeptide: 4-hydroxy-3-methylbut-2-enyl diphosphate reductase (316 aa).

A [4Fe-4S] cluster-binding site is contributed by Cys12. Positions 41 and 74 each coordinate (2E)-4-hydroxy-3-methylbut-2-enyl diphosphate. His41 and His74 together coordinate dimethylallyl diphosphate. His41 and His74 together coordinate isopentenyl diphosphate. Cys96 is a [4Fe-4S] cluster binding site. (2E)-4-hydroxy-3-methylbut-2-enyl diphosphate is bound at residue His124. His124 contacts dimethylallyl diphosphate. His124 provides a ligand contact to isopentenyl diphosphate. Catalysis depends on Glu126, which acts as the Proton donor. Position 167 (Thr167) interacts with (2E)-4-hydroxy-3-methylbut-2-enyl diphosphate. Residue Cys197 participates in [4Fe-4S] cluster binding. Positions 225, 226, 227, and 269 each coordinate (2E)-4-hydroxy-3-methylbut-2-enyl diphosphate. Dimethylallyl diphosphate contacts are provided by Ser225, Ser226, Asn227, and Ser269. Positions 225, 226, 227, and 269 each coordinate isopentenyl diphosphate.

It belongs to the IspH family. As to quaternary structure, homodimer. Requires [4Fe-4S] cluster as cofactor.

It catalyses the reaction isopentenyl diphosphate + 2 oxidized [2Fe-2S]-[ferredoxin] + H2O = (2E)-4-hydroxy-3-methylbut-2-enyl diphosphate + 2 reduced [2Fe-2S]-[ferredoxin] + 2 H(+). It carries out the reaction dimethylallyl diphosphate + 2 oxidized [2Fe-2S]-[ferredoxin] + H2O = (2E)-4-hydroxy-3-methylbut-2-enyl diphosphate + 2 reduced [2Fe-2S]-[ferredoxin] + 2 H(+). The protein operates within isoprenoid biosynthesis; dimethylallyl diphosphate biosynthesis; dimethylallyl diphosphate from (2E)-4-hydroxy-3-methylbutenyl diphosphate: step 1/1. It participates in isoprenoid biosynthesis; isopentenyl diphosphate biosynthesis via DXP pathway; isopentenyl diphosphate from 1-deoxy-D-xylulose 5-phosphate: step 6/6. Catalyzes the conversion of 1-hydroxy-2-methyl-2-(E)-butenyl 4-diphosphate (HMBPP) into a mixture of isopentenyl diphosphate (IPP) and dimethylallyl diphosphate (DMAPP). Acts in the terminal step of the DOXP/MEP pathway for isoprenoid precursor biosynthesis. This is 4-hydroxy-3-methylbut-2-enyl diphosphate reductase from Salmonella agona (strain SL483).